Consider the following 388-residue polypeptide: Phosphopentomutase (388 aa).

Mn(2+) contacts are provided by Asp11, Asp283, His288, Asp324, His325, and His336.

Belongs to the phosphopentomutase family. It depends on Mn(2+) as a cofactor.

It localises to the cytoplasm. It catalyses the reaction 2-deoxy-alpha-D-ribose 1-phosphate = 2-deoxy-D-ribose 5-phosphate. The catalysed reaction is alpha-D-ribose 1-phosphate = D-ribose 5-phosphate. The protein operates within carbohydrate degradation; 2-deoxy-D-ribose 1-phosphate degradation; D-glyceraldehyde 3-phosphate and acetaldehyde from 2-deoxy-alpha-D-ribose 1-phosphate: step 1/2. Its function is as follows. Isomerase that catalyzes the conversion of deoxy-ribose 1-phosphate (dRib-1-P) and ribose 1-phosphate (Rib-1-P) to deoxy-ribose 5-phosphate (dRib-5-P) and ribose 5-phosphate (Rib-5-P), respectively. This chain is Phosphopentomutase, found in Anaeromyxobacter sp. (strain K).